The following is a 179-amino-acid chain: Large ribosomal subunit protein uL6 (179 aa).

This sequence belongs to the universal ribosomal protein uL6 family. As to quaternary structure, part of the 50S ribosomal subunit.

This protein binds to the 23S rRNA, and is important in its secondary structure. It is located near the subunit interface in the base of the L7/L12 stalk, and near the tRNA binding site of the peptidyltransferase center. The protein is Large ribosomal subunit protein uL6 of Bacillus subtilis (strain 168).